We begin with the raw amino-acid sequence, 210 residues long: ATP-dependent Clp protease proteolytic subunit (210 aa).

Serine 114 (nucleophile) is an active-site residue. Residue histidine 139 is part of the active site.

The protein belongs to the peptidase S14 family. In terms of assembly, fourteen ClpP subunits assemble into 2 heptameric rings which stack back to back to give a disk-like structure with a central cavity, resembling the structure of eukaryotic proteasomes.

It localises to the cytoplasm. The catalysed reaction is Hydrolysis of proteins to small peptides in the presence of ATP and magnesium. alpha-casein is the usual test substrate. In the absence of ATP, only oligopeptides shorter than five residues are hydrolyzed (such as succinyl-Leu-Tyr-|-NHMec, and Leu-Tyr-Leu-|-Tyr-Trp, in which cleavage of the -Tyr-|-Leu- and -Tyr-|-Trp bonds also occurs).. Cleaves peptides in various proteins in a process that requires ATP hydrolysis. Has a chymotrypsin-like activity. Plays a major role in the degradation of misfolded proteins. The polypeptide is ATP-dependent Clp protease proteolytic subunit (Janthinobacterium sp. (strain Marseille) (Minibacterium massiliensis)).